The sequence spans 627 residues: Phosphomethylpyrimidine synthase (627 aa).

Over residues 1–24 the composition is skewed to polar residues; it reads MSATQKNNITRLEQLDRQSTQPFP. Residues 1–29 form a disordered region; it reads MSATQKNNITRLEQLDRQSTQPFPNSRKV. Substrate contacts are provided by residues asparagine 231, methionine 260, tyrosine 289, histidine 325, 345 to 347, 386 to 389, and glutamate 425; these read SRG and DGLR. Histidine 429 provides a ligand contact to Zn(2+). Residue tyrosine 452 coordinates substrate. A Zn(2+)-binding site is contributed by histidine 493. Residues cysteine 573, cysteine 576, and cysteine 581 each coordinate [4Fe-4S] cluster.

The protein belongs to the ThiC family. Homodimer. Requires [4Fe-4S] cluster as cofactor.

The enzyme catalyses 5-amino-1-(5-phospho-beta-D-ribosyl)imidazole + S-adenosyl-L-methionine = 4-amino-2-methyl-5-(phosphooxymethyl)pyrimidine + CO + 5'-deoxyadenosine + formate + L-methionine + 3 H(+). It functions in the pathway cofactor biosynthesis; thiamine diphosphate biosynthesis. Its function is as follows. Catalyzes the synthesis of the hydroxymethylpyrimidine phosphate (HMP-P) moiety of thiamine from aminoimidazole ribotide (AIR) in a radical S-adenosyl-L-methionine (SAM)-dependent reaction. In Pseudomonas aeruginosa (strain UCBPP-PA14), this protein is Phosphomethylpyrimidine synthase.